The primary structure comprises 151 residues: MAKILLVYATMSGNTEAMADLIEKGLQEALAEVDRFEAMDIDDAQLFTDYDHVIMGTYTWGDGDLPDEFLDLVEDMEEIDFSGKTCAVFGSGDTAYEFFCGAVDTLEAKIKERGGDIVLPSVKIENNPEGEEEEELINFGRQFAKKSGCAV.

Residues 4–144 form the Flavodoxin-like domain; sequence ILLVYATMSG…ELINFGRQFA (141 aa). Residues 10–14 and 88–119 contribute to the FMN site; these read TMSGN and VFGS…DIVL.

It belongs to the flavodoxin family. Requires FMN as cofactor.

Low-potential electron donor to a number of redox enzymes. The sequence is that of Probable flavodoxin 2 (ykuP) from Bacillus subtilis (strain 168).